The primary structure comprises 284 residues: RNase adapter protein RapZ (284 aa).

An ATP-binding site is contributed by G8–S15. D56–N59 contributes to the GTP binding site. Residues R266–S284 form an RNA-binding region.

This sequence belongs to the RapZ-like family. RapZ subfamily. In terms of assembly, homotrimer.

Functionally, modulates the synthesis of GlmS, by affecting the processing and stability of the regulatory small RNA GlmZ. When glucosamine-6-phosphate (GlcN6P) concentrations are high in the cell, RapZ binds GlmZ and targets it to cleavage by RNase E. Consequently, GlmZ is inactivated and unable to activate GlmS synthesis. Under low GlcN6P concentrations, RapZ is sequestered and inactivated by an other regulatory small RNA, GlmY, preventing GlmZ degradation and leading to synthesis of GlmS. The polypeptide is RNase adapter protein RapZ (Sodalis glossinidius (strain morsitans)).